The following is a 9702-amino-acid chain: Nonribosomal peptide synthetase ungA (9702 aa).

The adenylation 1 stretch occupies residues glutamate 248–arginine 647. The region spanning alanine 775–threonine 852 is the Carrier 1 domain. Serine 812 bears the O-(pantetheine 4'-phosphoryl)serine mark. Positions aspartate 891–glutamine 1288 are condensation 1. Positions glutamine 1330–arginine 1730 are adenylation 2. In terms of domain architecture, Carrier 2 spans leucine 1857–aspartate 1933. The residue at position 1894 (serine 1894) is an O-(pantetheine 4'-phosphoryl)serine. The interval proline 1946–glutamine 2374 is epimerization 1. A condensation 2 region spans residues glutamate 2414 to aspartate 2842. An adenylation 3 region spans residues glutamine 2868–arginine 3267. The Carrier 3 domain maps to alanine 3397–serine 3473. Serine 3434 carries the O-(pantetheine 4'-phosphoryl)serine modification. Positions glutamate 3512 to serine 3920 are condensation 3. The interval lysine 3957–arginine 4361 is adenylation 4. A Carrier 4 domain is found at proline 4491–aspartate 4568. Serine 4528 bears the O-(pantetheine 4'-phosphoryl)serine mark. Residues alanine 4583–leucine 5013 are epimerization 2. Positions valine 5049–glutamate 5474 are condensation 4. An adenylation 5 region spans residues methionine 5496–histidine 5899. Positions threonine 6033–alanine 6110 constitute a Carrier 5 domain. Position 6070 is an O-(pantetheine 4'-phosphoryl)serine (serine 6070). An epimerization 3 region spans residues glutamate 6127–alanine 6551. A condensation 5 region spans residues valine 6593–alanine 6935. The adenylation 6 stretch occupies residues lysine 7047 to arginine 7447. The 81-residue stretch at glycine 7575–valine 7655 folds into the Carrier 6 domain. Serine 7613 carries the post-translational modification O-(pantetheine 4'-phosphoryl)serine. The tract at residues aspartate 7670–glutamine 8106 is epimerization 4. A condensation 6 region spans residues valine 8144–glutamine 8588. The segment at asparagine 8612–arginine 9025 is adenylation 7. The Carrier 7 domain maps to serine 9158 to alanine 9236. Serine 9196 is modified (O-(pantetheine 4'-phosphoryl)serine). Positions aspartate 9282 to alanine 9629 are condensation 7.

This sequence belongs to the NRP synthetase family.

It functions in the pathway secondary metabolite biosynthesis. Functionally, nonribosomal peptide synthetase; part of the gene cluster that mediates the biosynthesis of the unguisins, gamma-aminobutyric acid (GABA)-containing fungal cyclic heptapeptides with the amino acid sequence cyclo-(D-Ala1-D-Val2-L-Phe3-D-Val4-D-Ala5-D-Trp6-GABA7) for unguisin A and cyclo-(D-Ala1-D-Val2-L-Leu3-D-Val4-D-Ala5-D-Trp6-GABA7) for unguisin B. UngA is the main enzyme within the cluster which condenses the 7 residues using its respective 7 modules. The terminal condensation domain (Ct) is involved in cyclization with D-alanine and thereby releasing of unguisins A and B. The alanine racemase ungC provides D-alanine, which is then accepted by the first adenylation domain of ungA. Finally, the hydrolase ungD catalyzes the hydrolysis between the D-tryptophan and GABA residues of unguisins A and B to produce the corresponding linear peptides. This is Nonribosomal peptide synthetase ungA from Aspergillus violaceofuscus (strain CBS 115571).